A 39-amino-acid polypeptide reads, in one-letter code: Photosystem I reaction center subunit IX (39 aa).

A helical membrane pass occupies residues F7–I27.

This sequence belongs to the PsaJ family.

It localises to the cellular thylakoid membrane. Functionally, may help in the organization of the PsaE and PsaF subunits. The chain is Photosystem I reaction center subunit IX from Synechococcus sp. (strain JA-2-3B'a(2-13)) (Cyanobacteria bacterium Yellowstone B-Prime).